Consider the following 473-residue polypeptide: tRNA modification GTPase MnmE (473 aa).

(6S)-5-formyl-5,6,7,8-tetrahydrofolate-binding residues include arginine 31, glutamate 95, and arginine 134. Positions glycine 230 to lysine 394 constitute a TrmE-type G domain. Residues asparagine 240–threonine 245, serine 259–threonine 265, and aspartate 284–glycine 287 each bind GTP. Residues serine 244 and threonine 265 each contribute to the Mg(2+) site. Lysine 473 provides a ligand contact to (6S)-5-formyl-5,6,7,8-tetrahydrofolate.

It belongs to the TRAFAC class TrmE-Era-EngA-EngB-Septin-like GTPase superfamily. TrmE GTPase family. Homodimer. Heterotetramer of two MnmE and two MnmG subunits. K(+) is required as a cofactor.

The protein resides in the cytoplasm. Functionally, exhibits a very high intrinsic GTPase hydrolysis rate. Involved in the addition of a carboxymethylaminomethyl (cmnm) group at the wobble position (U34) of certain tRNAs, forming tRNA-cmnm(5)s(2)U34. The polypeptide is tRNA modification GTPase MnmE (Chlorobaculum tepidum (strain ATCC 49652 / DSM 12025 / NBRC 103806 / TLS) (Chlorobium tepidum)).